Consider the following 396-residue polypeptide: S-arrestin (396 aa).

A compositionally biased stretch (basic and acidic residues) spans 375–386; that stretch reads ARDPLKGELQAE. The segment at 375–396 is disordered; sequence ARDPLKGELQAEEKEEEEDDEK. Acidic residues predominate over residues 387–396; that stretch reads EKEEEEDDEK.

Belongs to the arrestin family. In terms of assembly, interacts with RHO (via the phosphorylated C-terminus).

Its subcellular location is the cell projection. It localises to the cilium. It is found in the photoreceptor outer segment. The protein localises to the membrane. Its function is as follows. Binds to photoactivated, phosphorylated RHO and terminates RHO signaling via G-proteins by competing with G-proteins for the same binding site on RHO. May play a role in preventing light-dependent degeneration of retinal photoreceptor cells. This is S-arrestin (sag) from Xenopus laevis (African clawed frog).